The sequence spans 89 residues: Small ribosomal subunit protein uS14 (89 aa).

This sequence belongs to the universal ribosomal protein uS14 family. In terms of assembly, part of the 30S ribosomal subunit. Contacts proteins S3 and S10.

Its function is as follows. Binds 16S rRNA, required for the assembly of 30S particles and may also be responsible for determining the conformation of the 16S rRNA at the A site. This is Small ribosomal subunit protein uS14 from Chlorobium limicola (strain DSM 245 / NBRC 103803 / 6330).